We begin with the raw amino-acid sequence, 380 residues long: S-phase entry cyclin-6 (380 aa).

Residues 63-91 (PRGKLQRDSTHLEKTRKRQLSNDSTDPIE) are disordered.

It belongs to the cyclin family. Cyclin AB subfamily.

Its function is as follows. Involved in G1/S and or S phase progression. Interacts with CDC28. This is S-phase entry cyclin-6 (CLB6) from Saccharomyces cerevisiae (strain ATCC 204508 / S288c) (Baker's yeast).